A 293-amino-acid polypeptide reads, in one-letter code: Protease HtpX (293 aa).

Helical transmembrane passes span 4-24 (IALF…VLSL) and 34-54 (GLMI…LLMS). Histidine 139 is a binding site for Zn(2+). The active site involves glutamate 140. Histidine 143 contacts Zn(2+). The next 2 membrane-spanning stretches (helical) occupy residues 158-178 (IVNT…AGFL) and 193-213 (MVYF…ASII). Glutamate 222 serves as a coordination point for Zn(2+).

The protein belongs to the peptidase M48B family. The cofactor is Zn(2+).

It is found in the cell inner membrane. This Yersinia enterocolitica serotype O:8 / biotype 1B (strain NCTC 13174 / 8081) protein is Protease HtpX.